The primary structure comprises 328 residues: Gonadotropin-releasing hormone receptor (328 aa).

Residues 1–38 (MANSASPEQNQNHCSASNSSIPLTQANLPTLTLSGKIR) are Extracellular-facing. N-linked (GlcNAc...) asparagine glycosylation occurs at Asn-18. A helical membrane pass occupies residues 39 to 59 (VTVTFFLFLLSTTFNASFLLK). The Cytoplasmic portion of the chain corresponds to 60 to 84 (LHKWTQKKENGKKLSKMKVLLKHLT). A helical membrane pass occupies residues 85 to 105 (LANLLETLIVMPLDGMWNITV). The Extracellular segment spans residues 106–115 (QWYAGELLCK). Cys-114 and Cys-196 are oxidised to a cystine. A helical membrane pass occupies residues 116 to 136 (VLSYLKLFSMYAPAFMMVVIS). Topologically, residues 137–157 (LDRSLAITRPLAVKSNSKLGR) are cytoplasmic. Residues 158–178 (SMIGLAWLLSSIFAGPQLYIF) form a helical membrane-spanning segment. Residues 179–208 (RMIHLADSSGQTEGFSQCVTHCSFPQWWHQ) are Extracellular-facing. Residues 209 to 229 (AFYNFFTFSCLFIIPLLFMLI) form a helical membrane-spanning segment. Topologically, residues 230–271 (CNAKIIFTLTRVLHQDPHKLQLNQSKNNIPRARLRTLKMTVA) are cytoplasmic. The chain crosses the membrane as a helical span at residues 272–292 (FATSFTVCWTPYYVLGIWYWF). At 293–306 (DPEMLNRVSDPVNH) the chain is on the extracellular side. Residues 307-327 (FFFLFALLNPCFDPLIYGYFS) traverse the membrane as a helical segment. Residue Leu-328 is a topological domain, cytoplasmic.

Belongs to the G-protein coupled receptor 1 family.

The protein resides in the cell membrane. Receptor for gonadotropin releasing hormone (GnRH) that mediates the action of GnRH to stimulate the secretion of the gonadotropic hormones luteinizing hormone (LH) and follicle-stimulating hormone (FSH). This receptor mediates its action by association with G-proteins that activate a phosphatidylinositol-calcium second messenger system. This Equus caballus (Horse) protein is Gonadotropin-releasing hormone receptor (GNRHR).